We begin with the raw amino-acid sequence, 356 residues long: MAGLKLQAVTKSWDGKTQVIQPLTLDVADGEFIVMVGPSGCGKSTLLRMVAGLERVTSGDIWIDRKRVTEMEPKDRGIAIVFQNYALYPHMSVEENMAWGLKIRGMSKAHIEERVREAARILELDGLLKRRPRELSGGQRQRVAMGRAIVREPAVFLFDEPLSNLDAKLRVQMRLELQHLHRRLRTTSLYVTHDQVEAMTLAQRVMVMNKGVAEQIGTPVEVYEKPASRFVASFIGSPAMNLLDGVISASGDRFELPGGLALPIGAGYRGHAGRKMTLGIRPEHIALSSQAEGGVPLTVDTLEILGADNLAHGRWGDQKLVVRLAHQQRPAAGSTLWLHLPEHQRHLFDGETGQRV.

The region spanning 4–235 is the ABC transporter domain; sequence LKLQAVTKSW…PASRFVASFI (232 aa). 37-44 is a binding site for ATP; that stretch reads GPSGCGKS.

It belongs to the ABC transporter superfamily. sn-glycerol-3-phosphate importer (TC 3.A.1.1.3) family. The complex is composed of two ATP-binding proteins (UgpC), two transmembrane proteins (UgpA and UgpE) and a solute-binding protein (UgpB).

It localises to the cell inner membrane. It catalyses the reaction sn-glycerol 3-phosphate(out) + ATP + H2O = sn-glycerol 3-phosphate(in) + ADP + phosphate + H(+). In terms of biological role, part of the ABC transporter complex UgpBAEC involved in sn-glycerol-3-phosphate (G3P) import. Responsible for energy coupling to the transport system. The chain is sn-glycerol-3-phosphate import ATP-binding protein UgpC from Salmonella paratyphi A (strain ATCC 9150 / SARB42).